The following is a 205-amino-acid chain: Holliday junction branch migration complex subunit RuvA (205 aa).

Residues 1 to 64 (MIGRLRGVLV…EDAQLLYGFI (64 aa)) are domain I. The domain II stretch occupies residues 65–143 (TKQERALFRL…SLMEASAGSE (79 aa)). A flexible linker region spans residues 144–156 (REFVLQSNYSPTP). A domain III region spans residues 157–205 (TVNSAEEDAISALISLGYKPPQASKSVSAAYKEGMDSETLIKAALKSML).

It belongs to the RuvA family. In terms of assembly, homotetramer. Forms an RuvA(8)-RuvB(12)-Holliday junction (HJ) complex. HJ DNA is sandwiched between 2 RuvA tetramers; dsDNA enters through RuvA and exits via RuvB. An RuvB hexamer assembles on each DNA strand where it exits the tetramer. Each RuvB hexamer is contacted by two RuvA subunits (via domain III) on 2 adjacent RuvB subunits; this complex drives branch migration. In the full resolvosome a probable DNA-RuvA(4)-RuvB(12)-RuvC(2) complex forms which resolves the HJ.

The protein localises to the cytoplasm. The RuvA-RuvB-RuvC complex processes Holliday junction (HJ) DNA during genetic recombination and DNA repair, while the RuvA-RuvB complex plays an important role in the rescue of blocked DNA replication forks via replication fork reversal (RFR). RuvA specifically binds to HJ cruciform DNA, conferring on it an open structure. The RuvB hexamer acts as an ATP-dependent pump, pulling dsDNA into and through the RuvAB complex. HJ branch migration allows RuvC to scan DNA until it finds its consensus sequence, where it cleaves and resolves the cruciform DNA. This chain is Holliday junction branch migration complex subunit RuvA, found in Shewanella sp. (strain W3-18-1).